A 569-amino-acid chain; its full sequence is Carotenoid cleavage dioxygenase 8 homolog B, chloroplastic (569 aa).

A chloroplast-targeting transit peptide spans 1 to 43; it reads MSPAMLQASSLCVSAALSGAASRPGRLASQGHQGKRAVAQPLA. The interval 23-81 is disordered; it reads RPGRLASQGHQGKRAVAQPLAASAVTEAAPPAPVVAPPARPVDAPRRRGGRGGGGGGGE. The span at 52–62 shows a compositional bias: pro residues; the sequence is PPAPVVAPPAR. Fe cation-binding residues include His251, His301, His368, and His558.

This sequence belongs to the carotenoid oxygenase family. Requires Fe(2+) as cofactor. Expressed in parenchyma cells of the root stele, shoot apex, leaf buds, xylem parenchyma cells of the stem, inflorescences and panicles.

Its subcellular location is the plastid. It is found in the chloroplast. It catalyses the reaction 9-cis-10'-apo-beta-carotenal + 2 O2 = (2E,4E,6E)-7-hydroxy-4-methylhepta-2,4,6-trienal + (11R)-carlactone. It carries out the reaction all-trans-10'-apo-beta-carotenal + O2 = (2E,4E,6E)-4-methylocta-2,4,6-trienedial + 13-apo-beta-carotenone. Involved in strigolactones biosynthesis by cleaving the C(27) 9-cis-10'-apo-beta-carotenal produced by CCD7. Produces the C(19) carlactone and a C(8) hydroxyaldehyde. Also shows lower activity with all-trans-10'-apo-beta-carotenal producing a C(9) dialdehyde and the C(18) 13-apo-beta-carotenone. Strigolactones are hormones that inhibit tillering and shoot branching through the MAX-dependent pathway, contribute to the regulation of shoot architectural response to phosphate-limiting conditions and function as rhizosphere signal that stimulates hyphal branching of arbuscular mycorrhizal fungi and trigger seed germination of root parasitic weeds. This chain is Carotenoid cleavage dioxygenase 8 homolog B, chloroplastic (CCD8B), found in Oryza sativa subsp. japonica (Rice).